A 968-amino-acid polypeptide reads, in one-letter code: RNA polymerase-associated protein RapA (968 aa).

Positions Glu163–Asp332 constitute a Helicase ATP-binding domain. Asp176–Thr183 contacts ATP. The DEAH box signature appears at Asp278 to His281. The Helicase C-terminal domain maps to Arg491 to His641.

Belongs to the SNF2/RAD54 helicase family. RapA subfamily. Interacts with the RNAP. Has a higher affinity for the core RNAP than for the holoenzyme. Its ATPase activity is stimulated by binding to RNAP.

Functionally, transcription regulator that activates transcription by stimulating RNA polymerase (RNAP) recycling in case of stress conditions such as supercoiled DNA or high salt concentrations. Probably acts by releasing the RNAP, when it is trapped or immobilized on tightly supercoiled DNA. Does not activate transcription on linear DNA. Probably not involved in DNA repair. The polypeptide is RNA polymerase-associated protein RapA (Shewanella baltica (strain OS185)).